The chain runs to 125 residues: Glycine cleavage system H protein (125 aa).

Positions 22 to 103 constitute a Lipoyl-binding domain; that stretch reads VFVVGITENA…AFTAWIFKIK (82 aa). K63 carries the post-translational modification N6-lipoyllysine.

Belongs to the GcvH family. As to quaternary structure, the glycine cleavage system is composed of four proteins: P, T, L and H. (R)-lipoate serves as cofactor.

Functionally, the glycine cleavage system catalyzes the degradation of glycine. The H protein shuttles the methylamine group of glycine from the P protein to the T protein. This is Glycine cleavage system H protein from Bordetella avium (strain 197N).